Consider the following 212-residue polypeptide: Large ribosomal subunit protein bL25 (212 aa).

Residues 179–212 (EPEEEELPEDDEAAAEGEDAAAGEEAEAPAESED) form a disordered region.

The protein belongs to the bacterial ribosomal protein bL25 family. CTC subfamily. Part of the 50S ribosomal subunit; part of the 5S rRNA/L5/L18/L25 subcomplex. Contacts the 5S rRNA. Binds to the 5S rRNA independently of L5 and L18.

Functionally, this is one of the proteins that binds to the 5S RNA in the ribosome where it forms part of the central protuberance. In Corynebacterium urealyticum (strain ATCC 43042 / DSM 7109), this protein is Large ribosomal subunit protein bL25.